A 318-amino-acid chain; its full sequence is Porphobilinogen deaminase (318 aa).

C248 bears the S-(dipyrrolylmethanemethyl)cysteine mark.

This sequence belongs to the HMBS family. Monomer. Dipyrromethane is required as a cofactor.

The catalysed reaction is 4 porphobilinogen + H2O = hydroxymethylbilane + 4 NH4(+). It participates in porphyrin-containing compound metabolism; protoporphyrin-IX biosynthesis; coproporphyrinogen-III from 5-aminolevulinate: step 2/4. Tetrapolymerization of the monopyrrole PBG into the hydroxymethylbilane pre-uroporphyrinogen in several discrete steps. This Caulobacter sp. (strain K31) protein is Porphobilinogen deaminase.